Here is a 351-residue protein sequence, read N- to C-terminus: tRNA N6-adenosine threonylcarbamoyltransferase (351 aa).

Residues His-111 and His-115 each contribute to the Fe cation site. Residues 134 to 138 (LVSGG), Asp-167, Gly-180, and Asn-276 each bind substrate. Asp-304 contributes to the Fe cation binding site.

This sequence belongs to the KAE1 / TsaD family. Requires Fe(2+) as cofactor.

It localises to the cytoplasm. It catalyses the reaction L-threonylcarbamoyladenylate + adenosine(37) in tRNA = N(6)-L-threonylcarbamoyladenosine(37) in tRNA + AMP + H(+). Functionally, required for the formation of a threonylcarbamoyl group on adenosine at position 37 (t(6)A37) in tRNAs that read codons beginning with adenine. Is involved in the transfer of the threonylcarbamoyl moiety of threonylcarbamoyl-AMP (TC-AMP) to the N6 group of A37, together with TsaE and TsaB. TsaD likely plays a direct catalytic role in this reaction. In Marinobacter nauticus (strain ATCC 700491 / DSM 11845 / VT8) (Marinobacter aquaeolei), this protein is tRNA N6-adenosine threonylcarbamoyltransferase.